The chain runs to 145 residues: Small ribosomal subunit protein eS19 (145 aa).

A disordered region spans residues 120–145 (GGRRISENGQRDLDRIAAQTLEEDDE). The segment covering 123-134 (RISENGQRDLDR) has biased composition (basic and acidic residues).

It belongs to the eukaryotic ribosomal protein eS19 family. As to quaternary structure, component of the small ribosomal subunit. Mature ribosomes consist of a small (40S) and a large (60S) subunit. The 40S subunit contains about 32 different proteins and 1 molecule of RNA (18S). The 60S subunit contains 45 different proteins and 3 molecules of RNA (25S, 5.8S and 5S).

It localises to the cytoplasm. Functionally, component of the ribosome, a large ribonucleoprotein complex responsible for the synthesis of proteins in the cell. The small ribosomal subunit (SSU) binds messenger RNAs (mRNAs) and translates the encoded message by selecting cognate aminoacyl-transfer RNA (tRNA) molecules. The large subunit (LSU) contains the ribosomal catalytic site termed the peptidyl transferase center (PTC), which catalyzes the formation of peptide bonds, thereby polymerizing the amino acids delivered by tRNAs into a polypeptide chain. The nascent polypeptides leave the ribosome through a tunnel in the LSU and interact with protein factors that function in enzymatic processing, targeting, and the membrane insertion of nascent chains at the exit of the ribosomal tunnel. RPS19A is required for proper maturation of the small (40S) ribosomal subunit. In Candida albicans (strain SC5314 / ATCC MYA-2876) (Yeast), this protein is Small ribosomal subunit protein eS19 (RPS19A).